The primary structure comprises 352 residues: Ion-translocating oxidoreductase complex subunit D (352 aa).

4 consecutive transmembrane segments (helical) span residues isoleucine 20–glycine 40, glycine 42–leucine 62, isoleucine 89–alanine 109, and proline 123–leucine 143. Threonine 187 carries the FMN phosphoryl threonine modification. Transmembrane regions (helical) follow at residues isoleucine 214–leucine 234, tryptophan 242–phenylalanine 262, leucine 267–leucine 287, leucine 301–proline 321, and aspartate 322–threonine 342.

This sequence belongs to the NqrB/RnfD family. In terms of assembly, the complex is composed of six subunits: RsxA, RsxB, RsxC, RsxD, RsxE and RsxG. FMN is required as a cofactor.

It is found in the cell inner membrane. Its function is as follows. Part of a membrane-bound complex that couples electron transfer with translocation of ions across the membrane. Required to maintain the reduced state of SoxR. In Shigella sonnei (strain Ss046), this protein is Ion-translocating oxidoreductase complex subunit D.